The chain runs to 209 residues: GTP cyclohydrolase-2 (209 aa).

A GTP-binding site is contributed by 49-53; sequence RIHSE. Cysteine 54, cysteine 65, and cysteine 67 together coordinate Zn(2+). Residues glutamine 70, 92–94, and threonine 114 each bind GTP; that span reads EGR. Aspartate 126 acts as the Proton acceptor in catalysis. Arginine 128 (nucleophile) is an active-site residue. The GTP site is built by threonine 149 and lysine 154.

This sequence belongs to the GTP cyclohydrolase II family. Zn(2+) serves as cofactor.

It carries out the reaction GTP + 4 H2O = 2,5-diamino-6-hydroxy-4-(5-phosphoribosylamino)-pyrimidine + formate + 2 phosphate + 3 H(+). The protein operates within cofactor biosynthesis; riboflavin biosynthesis; 5-amino-6-(D-ribitylamino)uracil from GTP: step 1/4. In terms of biological role, catalyzes the conversion of GTP to 2,5-diamino-6-ribosylamino-4(3H)-pyrimidinone 5'-phosphate (DARP), formate and pyrophosphate. The sequence is that of GTP cyclohydrolase-2 from Shewanella halifaxensis (strain HAW-EB4).